Here is a 417-residue protein sequence, read N- to C-terminus: NADH-quinone oxidoreductase subunit D (417 aa).

The protein belongs to the complex I 49 kDa subunit family. In terms of assembly, NDH-1 is composed of 14 different subunits. Subunits NuoB, C, D, E, F, and G constitute the peripheral sector of the complex.

The protein resides in the cell inner membrane. It carries out the reaction a quinone + NADH + 5 H(+)(in) = a quinol + NAD(+) + 4 H(+)(out). In terms of biological role, NDH-1 shuttles electrons from NADH, via FMN and iron-sulfur (Fe-S) centers, to quinones in the respiratory chain. The immediate electron acceptor for the enzyme in this species is believed to be ubiquinone. Couples the redox reaction to proton translocation (for every two electrons transferred, four hydrogen ions are translocated across the cytoplasmic membrane), and thus conserves the redox energy in a proton gradient. The polypeptide is NADH-quinone oxidoreductase subunit D (Francisella tularensis subsp. tularensis (strain FSC 198)).